The primary structure comprises 513 residues: Aspartyl protease family protein 1 (513 aa).

A signal peptide spans 1–21 (MVWYSSCRILFLGLLILLASS). The 342-residue stretch at 104 to 445 (HYANVTVGTP…DREKLILGWK (342 aa)) folds into the Peptidase A1 domain. Catalysis depends on residues Asp-122 and Asp-327. The interval 452–488 (GETSARTLPSNRSSSSARPPASSFDPEATNIPSQRPN) is disordered. Low complexity predominate over residues 455-474 (SARTLPSNRSSSSARPPASS). Ser-484 is lipidated: GPI-anchor amidated serine. Residues 485–513 (QRPNTSTTSAAYSLSISLSLFFFSILAIL) constitute a propeptide, removed in mature form.

Belongs to the peptidase A1 family.

Its subcellular location is the cell membrane. Its function is as follows. Aspartyl protease. Not able to cleave BAG6. This Arabidopsis thaliana (Mouse-ear cress) protein is Aspartyl protease family protein 1.